Consider the following 283-residue polypeptide: Adenylate kinase 2, chloroplastic (283 aa).

A chloroplast-targeting transit peptide spans 1-59 (MTGCVNSISPPPVTLYRHRASPSRSSFSLSGDALHSLYRHRRVSRSPSIIAPKFQIVAA). 74-79 (ASGKGT) is an ATP binding site. The segment at 94 to 123 (SAGDLLRAEIASGSENGRRAKEHMEKGQLV) is NMP. AMP-binding positions include Arg100, 121 to 123 (QLV), 150 to 153 (GYPR), and Gln157. An LID region spans residues 187 to 220 (GRRLDPVTGKIYHLKYSPPETEEIAVRLTQRFDD). Residue Arg188 participates in ATP binding. Arg217 and Arg228 together coordinate AMP.

This sequence belongs to the adenylate kinase family. As to quaternary structure, monomer.

The protein localises to the plastid. The protein resides in the chloroplast stroma. It catalyses the reaction AMP + ATP = 2 ADP. Catalyzes the reversible transfer of the terminal phosphate group between ATP and AMP. Plays an important role in cellular energy homeostasis and in adenine nucleotide metabolism. Plays a major role in the equilibration of adenylates and de novo synthesis of ADP in the plastid stroma. The sequence is that of Adenylate kinase 2, chloroplastic from Arabidopsis thaliana (Mouse-ear cress).